Reading from the N-terminus, the 338-residue chain is Solute carrier family 35 member B1 homolog (338 aa).

The next 9 helical transmembrane spans lie at 9–29 (FVIY…VQEK), 53–73 (LALV…LLTI), 84–104 (GSYV…NMAM), 111–131 (TAVV…VLIG), 135–155 (YSWT…LFMY), 168–188 (TLLG…TGAV), 213–233 (LMLG…YFTI), 244–264 (LIAV…ASFG), and 284–304 (VLLF…LVFA). Residues 334 to 338 (KKLNS) carry the Di-lysine motif motif.

It belongs to the nucleotide-sugar transporter family. SLC35B subfamily.

It is found in the endoplasmic reticulum membrane. Functionally, probable sugar transporter. This chain is Solute carrier family 35 member B1 homolog (meigo), found in Drosophila melanogaster (Fruit fly).